Reading from the N-terminus, the 206-residue chain is MARYLGPKLKLSRREGTDLFLKSGVRAIDSKCKIETAPGQHGARRGRLSDYGVQLREKQKVRRMYGVLEKQFRNYYKEAARLKGNTGENLLQLLEQRLDNVVYRMGFASTRAEARQLVSHKAVVVNGQVVNIPSFKVRPEDVVSVREKAKKQARIGAALELAEQREKPVWIEVDNNKLEGAFKRLPERSDLSAEINEQLIVELYSK.

An S4 RNA-binding domain is found at 96–157; it reads QRLDNVVYRM…KAKKQARIGA (62 aa).

It belongs to the universal ribosomal protein uS4 family. In terms of assembly, part of the 30S ribosomal subunit. Contacts protein S5. The interaction surface between S4 and S5 is involved in control of translational fidelity.

Functionally, one of the primary rRNA binding proteins, it binds directly to 16S rRNA where it nucleates assembly of the body of the 30S subunit. Its function is as follows. With S5 and S12 plays an important role in translational accuracy. The protein is Small ribosomal subunit protein uS4 of Idiomarina loihiensis (strain ATCC BAA-735 / DSM 15497 / L2-TR).